A 286-amino-acid polypeptide reads, in one-letter code: Secretory carrier-associated membrane protein 2 (286 aa).

Basic and acidic residues-rich tracts occupy residues 1 to 10 (MAGRYDRNPF) and 54 to 63 (STKDMKKKEK). Residues 1 to 63 (MAGRYDRNPF…STKDMKKKEK (63 aa)) are disordered. Over 1–126 (MAGRYDRNPF…LQRMQYLAFS (126 aa)) the chain is Cytoplasmic. Positions 52–89 (LDSTKDMKKKEKELQAKEAELNKRESELRRREEAASRA) form a coiled coil. The next 4 membrane-spanning stretches (helical) occupy residues 127-147 (SLLG…AAWI), 152-172 (VMIW…AYVL), 189-209 (FGWF…SAVA), and 237-257 (IFYF…VVVI). The Cytoplasmic portion of the chain corresponds to 258–286 (QQVYMYFRGSGKAAEMKREAARGAMRSAF).

This sequence belongs to the SCAMP family.

It is found in the cell membrane. The protein resides in the cytoplasmic vesicle. It localises to the secretory vesicle membrane. Probably involved in membrane trafficking. This chain is Secretory carrier-associated membrane protein 2 (SCAMP2), found in Oryza sativa subsp. japonica (Rice).